The chain runs to 355 residues: Alanine racemase (355 aa).

Lysine 34 functions as the Proton acceptor; specific for D-alanine in the catalytic mechanism. Residue lysine 34 is modified to N6-(pyridoxal phosphate)lysine. Arginine 133 contributes to the substrate binding site. Residue tyrosine 249 is the Proton acceptor; specific for L-alanine of the active site. Methionine 297 contributes to the substrate binding site.

This sequence belongs to the alanine racemase family. Pyridoxal 5'-phosphate serves as cofactor.

The enzyme catalyses L-alanine = D-alanine. It functions in the pathway amino-acid biosynthesis; D-alanine biosynthesis; D-alanine from L-alanine: step 1/1. Its function is as follows. Catalyzes the interconversion of L-alanine and D-alanine. May also act on other amino acids. The protein is Alanine racemase (alr) of Rickettsia peacockii (strain Rustic).